A 578-amino-acid chain; its full sequence is Arginine--tRNA ligase (578 aa).

A 'HIGH' region motif is present at residues 127–137 (PNLAKEMHVGH).

The protein belongs to the class-I aminoacyl-tRNA synthetase family. As to quaternary structure, monomer.

The protein resides in the cytoplasm. It catalyses the reaction tRNA(Arg) + L-arginine + ATP = L-arginyl-tRNA(Arg) + AMP + diphosphate. This Pseudomonas syringae pv. tomato (strain ATCC BAA-871 / DC3000) protein is Arginine--tRNA ligase.